The following is a 225-amino-acid chain: Protein-L-isoaspartate O-methyltransferase (225 aa).

Residues 57-60 (ATVS), H65, S89, 110-111 (EH), 142-143 (DG), T216, and Q221 contribute to the S-adenosyl-L-homocysteine site. S60 is a catalytic residue.

The protein belongs to the methyltransferase superfamily. L-isoaspartyl/D-aspartyl protein methyltransferase family. Monomer.

The protein resides in the cytoplasm. It localises to the cytosol. It catalyses the reaction [protein]-L-isoaspartate + S-adenosyl-L-methionine = [protein]-L-isoaspartate alpha-methyl ester + S-adenosyl-L-homocysteine. Initiates the repair of damaged proteins by catalyzing methyl esterification of L-isoaspartyl and D-aspartyl residues produced by spontaneous isomerization and racemization of L-aspartyl and L-asparaginyl residues in aging peptides and proteins. This is Protein-L-isoaspartate O-methyltransferase (pcm-1) from Caenorhabditis elegans.